The following is a 718-amino-acid chain: Protein spire homolog 2 (718 aa).

2 disordered regions span residues 1–22 (MARA…ARPE) and 143–166 (DSSC…EGGP). Residues 10–21 (AAPERAGGAARP) show a composition bias toward low complexity. A KIND domain is found at 26–207 (LSLEEVLKVY…RALFVETLEL (182 aa)). 3 WH2 domains span residues 251 to 265 (QLMR…LKKV), 281 to 299 (PFEM…LRKV), and 345 to 362 (LHEK…LRPV). The residue at position 374 (Ser374) is a Phosphoserine. Residues 397-434 (TDTGSGSQRPRPRVLLKAPTLAEMEEMNTSEEEESPCG) are disordered. Over residues 419–432 (EMEEMNTSEEEESP) the composition is skewed to acidic residues. Residues Ser443, Ser445, and Ser479 each carry the phosphoserine modification. The tract at residues 456–518 (MASGLQSAAQ…SSLSSVDGPE (63 aa)) is disordered. Residues 496-513 (SGQSQPLPSSALPSSLSS) are compositionally biased toward low complexity. The spir-box stretch occupies residues 538–558 (LALTVEEVVDVRRVLVKAEME).

Belongs to the spire family. In terms of tissue distribution, detected in oocytes.

It localises to the cytoplasm. It is found in the cytoskeleton. The protein localises to the cytosol. The protein resides in the cell membrane. Its subcellular location is the cytoplasmic vesicle membrane. Its function is as follows. Acts as an actin nucleation factor, remains associated with the slow-growing pointed end of the new filament. Involved in intracellular vesicle transport along actin fibers, providing a novel link between actin cytoskeleton dynamics and intracellular transport. Required for asymmetric spindle positioning and asymmetric cell division during oocyte meiosis. Required for normal formation of the cleavage furrow and for polar body extrusion during female germ cell meiosis. Also acts in the nucleus: together with SPIRE1 and SPIRE2, promotes assembly of nuclear actin filaments in response to DNA damage in order to facilitate movement of chromatin and repair factors after DNA damage. The protein is Protein spire homolog 2 (Spire2) of Mus musculus (Mouse).